A 157-amino-acid polypeptide reads, in one-letter code: 6,7-dimethyl-8-ribityllumazine synthase (157 aa).

5-amino-6-(D-ribitylamino)uracil contacts are provided by residues Phe-22, 57-59, and 81-83; these read AYE and TVI. 86–87 contributes to the (2S)-2-hydroxy-3-oxobutyl phosphate binding site; sequence GT. His-89 acts as the Proton donor in catalysis. Residue Phe-114 coordinates 5-amino-6-(D-ribitylamino)uracil. Position 128 (Arg-128) interacts with (2S)-2-hydroxy-3-oxobutyl phosphate.

It belongs to the DMRL synthase family. Forms an icosahedral capsid composed of 60 subunits, arranged as a dodecamer of pentamers.

The catalysed reaction is (2S)-2-hydroxy-3-oxobutyl phosphate + 5-amino-6-(D-ribitylamino)uracil = 6,7-dimethyl-8-(1-D-ribityl)lumazine + phosphate + 2 H2O + H(+). It functions in the pathway cofactor biosynthesis; riboflavin biosynthesis; riboflavin from 2-hydroxy-3-oxobutyl phosphate and 5-amino-6-(D-ribitylamino)uracil: step 1/2. In terms of biological role, catalyzes the formation of 6,7-dimethyl-8-ribityllumazine by condensation of 5-amino-6-(D-ribitylamino)uracil with 3,4-dihydroxy-2-butanone 4-phosphate. This is the penultimate step in the biosynthesis of riboflavin. This chain is 6,7-dimethyl-8-ribityllumazine synthase, found in Haemophilus influenzae (strain ATCC 51907 / DSM 11121 / KW20 / Rd).